Reading from the N-terminus, the 564-residue chain is MRFSQLYAPTLRENPADAEIPSQALLQRAGFIRKIAAGVYTYLPLARRTLLKIENIVREEMDRIGAQEILMPIIQPAELWIKSGRWDDYGPEMMKLKDRHNRDFTLGPTHEELVTELVKNELNSYKQLPVTLYQIANKYRDEIRPRFGVLRAREFIMKDAYSFHDSWESLDEVYKKFKEAYSRILERIGLRYTVIEASSGAIGGKESHEFVAFAEYGESNILYCDCGYAGSDEKVPYMGEYEVFDEDEKERELVHTPNVRTVEEVAQYLGVEIKRIVKSLIFKGRDGYVMVLVPGNRELNFEKLKAYLGDQSLQMALPENILEDFGVPIGFLGPVGISNVKIVADKGIKYMKNFVVGGMKKNYHYINVNLERDFQVEEWADLVVVNPGEPCPVCGKPLKSERGIELGHIFKLGTKYSETMDVKYMNKDGKMKPFIMGCYGWGISRTLGAIVEQLHDDNGIIWPVSVAPYEVVITVVGKENEKSFAEKLYRYLLDKGVDVLIDDRDVSPGVKFKDADLIGFPLRITIGKSYKDGKVELKERVGNVTIIEADEEVILKNVQHILKR.

The protein belongs to the class-II aminoacyl-tRNA synthetase family. ProS type 1 subfamily. In terms of assembly, homodimer.

The protein resides in the cytoplasm. It catalyses the reaction tRNA(Pro) + L-proline + ATP = L-prolyl-tRNA(Pro) + AMP + diphosphate. In terms of biological role, catalyzes the attachment of proline to tRNA(Pro) in a two-step reaction: proline is first activated by ATP to form Pro-AMP and then transferred to the acceptor end of tRNA(Pro). As ProRS can inadvertently accommodate and process non-cognate amino acids such as alanine and cysteine, to avoid such errors it has two additional distinct editing activities against alanine. One activity is designated as 'pretransfer' editing and involves the tRNA(Pro)-independent hydrolysis of activated Ala-AMP. The other activity is designated 'posttransfer' editing and involves deacylation of mischarged Ala-tRNA(Pro). The misacylated Cys-tRNA(Pro) is not edited by ProRS. The protein is Proline--tRNA ligase of Thermosipho melanesiensis (strain DSM 12029 / CIP 104789 / BI429).